The following is a 276-amino-acid chain: MRVSVPVLALAFGSLAAAAPNAGRRTCGSVPPPEFFEASEKVAALEESGAFADLQAPIEVETYFHVVASSRSERDGYISDQMLSDQIRVMNEDYAPHGVHFNLRETTRTINPSWASDGNEIAMKRSLRKGGYAALNVYFLKDLGGALGYCYFPTNAAPGSTTFIRDGCSVLSSSVPGGSGAPYDLGKTATHEVGHWMGLFHTFQGGCSGQGDYVSDTPPQRSPSSGCPVGRDSCPGGGVDPIHNYMDYSVDSCMNQFTRGQGTRMSSMWRQFRAGK.

Positions 1–18 are cleaved as a signal peptide; the sequence is MRVSVPVLALAFGSLAAA. Histidine 191 contributes to the Zn(2+) binding site. The active site involves glutamate 192. Residue histidine 195 coordinates Zn(2+). Positions 211 to 233 are disordered; the sequence is GDYVSDTPPQRSPSSGCPVGRDS. A disulfide bond links cysteine 227 and cysteine 253.

The protein belongs to the peptidase M43B family.

It localises to the secreted. In terms of biological role, secreted metalloproteinase that allows assimilation of proteinaceous substrates. Pays a pivotal role as a pathogenicity determinant during infections and contributes to the ability of the pathogen to persist within the mammalian host. Digests an immunodominant cell surface antigen (SOWgp) and prevents host recognition of endospores during the phase of development when these fungal cells are most vulnerable to phagocytic cell defenses. The protein is Extracellular metalloprotease 1 (MEP1) of Coccidioides posadasii (strain C735) (Valley fever fungus).